The sequence spans 193 residues: Thioredoxin reductase-like selenoprotein T1a (193 aa).

A signal peptide spans Met1–Ala21. The segment at residues Cys44–Sec47 is a cross-link (cysteinyl-selenocysteine (Cys-Sec)). Sec47 is a non-standard amino acid (selenocysteine). Residues Ile83–Gly101 form a helical membrane-spanning segment.

The protein belongs to the SelWTH family. Selenoprotein T subfamily. May contain a selenide-sulfide bond between Cys-44 and Sec-47. This bond is speculated to serve as redox-active pair. Expressed in embryonic olfactory vesicles and the photoreceptor cell layer of the embryonic retina. Low level in embryonic epiphysis.

The protein resides in the endoplasmic reticulum membrane. It catalyses the reaction [thioredoxin]-dithiol + NADP(+) = [thioredoxin]-disulfide + NADPH + H(+). In terms of biological role, selenoprotein with thioredoxin reductase-like oxidoreductase activity. The protein is Thioredoxin reductase-like selenoprotein T1a of Danio rerio (Zebrafish).